Consider the following 228-residue polypeptide: Urease accessory protein UreF (228 aa).

It belongs to the UreF family. As to quaternary structure, ureD, UreF and UreG form a complex that acts as a GTP-hydrolysis-dependent molecular chaperone, activating the urease apoprotein by helping to assemble the nickel containing metallocenter of UreC. The UreE protein probably delivers the nickel.

The protein localises to the cytoplasm. Functionally, required for maturation of urease via the functional incorporation of the urease nickel metallocenter. The polypeptide is Urease accessory protein UreF (Prochlorococcus marinus (strain MIT 9215)).